The sequence spans 426 residues: Adenylosuccinate synthetase (426 aa).

Residues 18–24 (GDEGKGK) and 46–48 (GHT) each bind GTP. Catalysis depends on D19, which acts as the Proton acceptor. D19 and G46 together coordinate Mg(2+). Residues 19 to 22 (DEGK), 44 to 47 (NAGH), T136, R150, Q222, T237, and R301 contribute to the IMP site. H47 acts as the Proton donor in catalysis. Position 297-303 (297-303 (VTTKRKR)) interacts with substrate. Residues R303, 329-331 (KID), and 413-415 (GTG) each bind GTP.

Belongs to the adenylosuccinate synthetase family. In terms of assembly, homodimer. Mg(2+) is required as a cofactor.

It is found in the cytoplasm. The enzyme catalyses IMP + L-aspartate + GTP = N(6)-(1,2-dicarboxyethyl)-AMP + GDP + phosphate + 2 H(+). Its pathway is purine metabolism; AMP biosynthesis via de novo pathway; AMP from IMP: step 1/2. Plays an important role in the de novo pathway and in the salvage pathway of purine nucleotide biosynthesis. Catalyzes the first committed step in the biosynthesis of AMP from IMP. The sequence is that of Adenylosuccinate synthetase from Schistosoma mansoni (Blood fluke).